Reading from the N-terminus, the 705-residue chain is MQSDDRSVREGSDSSQTFLMKMAQPTGELTHPSQQQQLQLQQQSFQSIFGGASDTTEEIDTETDSNHRRPHSFGAAATTPAKLANKNVAPFLVKHIPEQYGPLGSRRTDKLEDLSSPNSKFCYRHRPDLKCRRQADEPSMDKLQRELETLPPSDQQGIAHVWSLFSAAPAKHRKLILQGIMAQCCFPQLSFVSATVRDLIRIDFLTALPPEISFKILCYLDTTSLCKAAQVSSRWRALADDDVVWHRMCEQHIHRKCKKCGWGLPLLERKRLRESKREIELRATTWDVSGPAQNAGGAECSAPHADDVITQKRKADSSDDETAIVKRHCSSLDARPEPDEDYYTTRYRPWKEVYKDRFKVGTNWKYGRCSTKVFKGHTNGVMCLQFEDNILATGSYDATIKIWDTETGEELRTLRGHQSGIRCLQFDDTKLISGSMDRSLKVWNWRTGECISTYTGHRGGVIGLHFDATILASASVDKTVKIWNFEDKSTFLLRGHTDWVNAVRVDTTSRTVFSASDDCTVRLWDLDTKACLRTFHGHVGQVQQVVPLPREFEFEDHDAECDNDNMSTTSGDTESNSLQATLGLESNATETSVFGPSFDNGRPAPPRYIVTSALDSTIRLWETTTGRCLRTFFGHLEGVWALGADTLRIVSGAEDRMVKIWDPRTGKCERTFTGHSGPVTCIGLGDSRFATGSEDCEVRMYSFRN.

The segment covering 1-12 has biased composition (basic and acidic residues); it reads MQSDDRSVREGS. Disordered regions lie at residues 1–42 and 55–80; these read MQSD…QLQQ and TTEE…ATTP. Low complexity predominate over residues 33 to 42; the sequence is SQQQQLQLQQ. The F-box domain maps to 202–248; that stretch reads IDFLTALPPEISFKILCYLDTTSLCKAAQVSSRWRALADDDVVWHRM. WD repeat units lie at residues 376 to 413, 416 to 455, 457 to 493, 495 to 536, 588 to 631, 634 to 671, and 674 to 705; these read GHTN…ELRT, GHQS…STYT, HRGG…TFLL, GHTD…RTFH, ATET…CLRT, GHLE…CERT, and GHSG…SFRN.

The protein belongs to the WD repeat MET30/SCONB/SCON-2 family. As to quaternary structure, component of the SCF(sconB) E3 ubiquitin ligase complex.

It participates in protein modification; protein ubiquitination. In terms of biological role, component of the SCF(sconB) E3 ubiquitin ligase complex involved in the regulation of sulfur metabolite repression, probably by mediating the inactivation or degradation of the metR transcription factor. The polypeptide is Probable E3 ubiquitin ligase complex SCF subunit sconB (sconB) (Aspergillus oryzae (strain ATCC 42149 / RIB 40) (Yellow koji mold)).